Reading from the N-terminus, the 158-residue chain is MGHFTFIGLCLLAMFLSLSGAECYTCPIDWLPKNGLCYKVFSNPKSWLDAEMFCRKFKPGCHLASIHRDADSADLAEYVSDYLKDDGNVWIGLNDPQKKRTWVWSDRSSSNYFSWNQGEPNNSKNKEYCVHLWAPTGYLKWNDAPCETLHPFICQCKY.

Positions 1–21 are cleaved as a signal peptide; sequence MGHFTFIGLCLLAMFLSLSGA. Intrachain disulfides connect cysteine 26–cysteine 37, cysteine 54–cysteine 154, cysteine 61–cysteine 156, and cysteine 129–cysteine 146. The region spanning 33–155 is the C-type lectin domain; it reads KNGLCYKVFS…CETLHPFICQ (123 aa). The short motif at 119–121 is the Mannose-binding element; it reads EPN. N-linked (GlcNAc...) asparagine glycosylation occurs at asparagine 121. Positions 127, 142, and 143 each coordinate Ca(2+).

Belongs to the true venom lectin family. In terms of assembly, homodimer; non-covalently linked. Expressed by the venom gland.

It localises to the secreted. Its function is as follows. Mannose-binding lectin which recognizes specific carbohydrate structures and agglutinates a variety of animal cells by binding to cell-surface glycoproteins and glycolipids. May be a calcium-dependent lectin. In Bungarus fasciatus (Banded krait), this protein is C-type lectin BfL-2.